A 1546-amino-acid polypeptide reads, in one-letter code: DNA-directed RNA polymerase subunit beta' (1546 aa).

The Zn(2+) site is built by Cys-57, Cys-59, Cys-72, and Cys-75. Residues Asp-756, Asp-758, and Asp-760 each contribute to the Mg(2+) site. Zn(2+) contacts are provided by Cys-1130, Cys-1211, Cys-1218, and Cys-1221. The segment at 1512 to 1546 (LEKYGEGSTSSDAVTGGQRYDDTRPGSSINPGYGD) is disordered. Over residues 1536–1546 (PGSSINPGYGD) the composition is skewed to polar residues.

This sequence belongs to the RNA polymerase beta' chain family. As to quaternary structure, the RNAP catalytic core consists of 2 alpha, 1 beta, 1 beta' and 1 omega subunit. When a sigma factor is associated with the core the holoenzyme is formed, which can initiate transcription. The cofactor is Mg(2+). Zn(2+) serves as cofactor.

The enzyme catalyses RNA(n) + a ribonucleoside 5'-triphosphate = RNA(n+1) + diphosphate. In terms of biological role, DNA-dependent RNA polymerase catalyzes the transcription of DNA into RNA using the four ribonucleoside triphosphates as substrates. This is DNA-directed RNA polymerase subunit beta' from Deinococcus radiodurans (strain ATCC 13939 / DSM 20539 / JCM 16871 / CCUG 27074 / LMG 4051 / NBRC 15346 / NCIMB 9279 / VKM B-1422 / R1).